The following is a 309-amino-acid chain: Probable manganese-dependent inorganic pyrophosphatase (309 aa).

Mn(2+) is bound by residues histidine 9, aspartate 13, aspartate 15, aspartate 75, histidine 97, and aspartate 149.

It belongs to the PPase class C family. Requires Mn(2+) as cofactor.

Its subcellular location is the cytoplasm. The catalysed reaction is diphosphate + H2O = 2 phosphate + H(+). This is Probable manganese-dependent inorganic pyrophosphatase from Bacillus cereus (strain AH187).